An 891-amino-acid polypeptide reads, in one-letter code: DNA mismatch repair protein MutS (891 aa).

ATP is bound at residue 617–624; that stretch reads GPNMSGKS. Residues 805-827 show a composition bias toward basic and acidic residues; that stretch reads REKIEEEEPKTKDTKRGPSEKVK. The disordered stretch occupies residues 805–840; the sequence is REKIEEEEPKTKDTKRGPSEKVKNASPTLPRDEKGR.

Belongs to the DNA mismatch repair MutS family.

Functionally, this protein is involved in the repair of mismatches in DNA. It is possible that it carries out the mismatch recognition step. This protein has a weak ATPase activity. This chain is DNA mismatch repair protein MutS, found in Porphyromonas gingivalis (strain ATCC BAA-308 / W83).